The sequence spans 246 residues: Homeobox protein SIX6 (246 aa).

Residues 126 to 186 constitute a DNA-binding region (homeobox); sequence WDGEQKTHCF…KNRRQRDRAA (61 aa). A compositionally biased stretch (polar residues) spans 195 to 204; sequence QVLAQGSGRS. The segment at 195–246 is disordered; sequence QVLAQGSGRSLQAEEESGGEAGGAASSPAVSLSSKAATSAISITSSDSECDI. The span at 217–246 shows a compositional bias: low complexity; it reads GAASSPAVSLSSKAATSAISITSSDSECDI.

It belongs to the SIX/Sine oculis homeobox family. In the developing embryo, expressed in the anterior head-fold, the anterior neural plate and optic vesicle. At later stages expression is maintained in the eye, while brain expression becomes limited. Not expressed in the lens placode.

It localises to the nucleus. Its function is as follows. May be involved in eye development. This chain is Homeobox protein SIX6 (SIX6), found in Gallus gallus (Chicken).